We begin with the raw amino-acid sequence, 117 residues long: Large ribosomal subunit protein uL18 (117 aa).

It belongs to the universal ribosomal protein uL18 family. As to quaternary structure, part of the 50S ribosomal subunit; part of the 5S rRNA/L5/L18/L25 subcomplex. Contacts the 5S and 23S rRNAs.

This is one of the proteins that bind and probably mediate the attachment of the 5S RNA into the large ribosomal subunit, where it forms part of the central protuberance. The chain is Large ribosomal subunit protein uL18 from Enterobacter sp. (strain 638).